We begin with the raw amino-acid sequence, 1246 residues long: Stromal processing peptidase, chloroplastic (1246 aa).

Residues 1–136 (MASFPSPPLA…AKIRRRHVLH (136 aa)) constitute a chloroplast transit peptide. Position 228 (His-228) interacts with Zn(2+). The active-site Proton acceptor is Glu-231. His-232 is a binding site for Zn(2+). The active site involves Glu-302. Glu-309 is a binding site for Zn(2+).

The protein belongs to the peptidase M16 family. Zn(2+) serves as cofactor.

The protein resides in the plastid. Its subcellular location is the chloroplast stroma. Cleaves presequences (transit peptides) from chloroplastic protein precursors. Initially recognizes a precursor by binding to the C-terminus of its transit peptide and then removes the transit peptide in a single endoproteolytic step. In a next step, pursues the cleavage of transit peptide to a subfragment form. The sequence is that of Stromal processing peptidase, chloroplastic from Oryza sativa subsp. japonica (Rice).